The following is a 735-amino-acid chain: F-box and leucine-rich repeat protein 13 (735 aa).

In terms of domain architecture, F-box spans 152–198 (KCDISLLPERAILQIFFYLSLKDVIICGQVNHAWMLMTQLNSLWNAI). LRR repeat units follow at residues 230 to 254 (GCLL…NVSD), 255 to 280 (CPTF…NLSN), 281 to 305 (TTIT…SLAY), 306 to 333 (CRRF…DLSG), 334 to 359 (CTQI…TIND), 360 to 385 (MPTL…VFTG), 386 to 406 (APHI…RKIR), 410 to 435 (NKRV…YMAD), 436 to 460 (CKGI…NLAN), 461 to 488 (CVRI…NLSN), 489 to 514 (CVRL…SLRN), 515 to 538 (CEHL…IDLS), 539 to 563 (GTDI…SVSE), 564 to 589 (CYRI…DVSY), 590 to 615 (CSQL…SIAG), 616 to 641 (CPKI…DISG), and 642 to 667 (CVLL…KMQY). Positions 682–692 (KVQQQEYNTND) are enriched in polar residues. The disordered stretch occupies residues 682–703 (KVQQQEYNTNDPPRWFGYDREG).

This sequence belongs to the DRC6 family. In terms of assembly, component of the nexin-dynein regulatory complex (N-DRC). Directly interacts with SKP1 and CUL1. Interacts with TCTE1/DRC5.

Its subcellular location is the cytoplasm. The protein localises to the cytoskeleton. It is found in the flagellum axoneme. It localises to the microtubule organizing center. The protein resides in the centrosome. Its function is as follows. Substrate-recognition component of the SCF (SKP1-CUL1-F-box protein)-type E3 ubiquitin ligase complex. Component of the nexin-dynein regulatory complex (N-DRC), a key regulator of ciliary/flagellar motility which maintains the alignment and integrity of the distal axoneme and regulates microtubule sliding in motile axonemes. Specifically targets CEP192 isoform 3 for ubiquitin-mediated proteolysis and thereby acts as a regulator of microtubule nucleation activity. This Homo sapiens (Human) protein is F-box and leucine-rich repeat protein 13 (FBXL13).